The sequence spans 213 residues: Ribonuclease T (213 aa).

An Exonuclease domain is found at 28–202; it reads VVVDVETGGF…YDTEQTARLF (175 aa). 4 residues coordinate Mg(2+): Asp31, Glu33, His189, and Asp194. The active-site Proton donor/acceptor is His189.

The protein belongs to the RNase T family. As to quaternary structure, homodimer. Requires Mg(2+) as cofactor.

Functionally, trims short 3' overhangs of a variety of RNA species, leaving a one or two nucleotide 3' overhang. Responsible for the end-turnover of tRNA: specifically removes the terminal AMP residue from uncharged tRNA (tRNA-C-C-A). Also appears to be involved in tRNA biosynthesis. The sequence is that of Ribonuclease T from Xanthomonas euvesicatoria pv. vesicatoria (strain 85-10) (Xanthomonas campestris pv. vesicatoria).